Reading from the N-terminus, the 342-residue chain is uncharacterized protein (342 aa).

Residues 3 to 173 enclose the MurNAc-LAA domain; it reads IAIRGGHNFL…LIGYLIAKGI (171 aa).

This sequence to C.perfringens CPE1502.

This is an uncharacterized protein from Clostridium perfringens.